A 294-amino-acid chain; its full sequence is Phosphoribosylaminoimidazole-succinocarboxamide synthase (294 aa).

It belongs to the SAICAR synthetase family.

The catalysed reaction is 5-amino-1-(5-phospho-D-ribosyl)imidazole-4-carboxylate + L-aspartate + ATP = (2S)-2-[5-amino-1-(5-phospho-beta-D-ribosyl)imidazole-4-carboxamido]succinate + ADP + phosphate + 2 H(+). The protein operates within purine metabolism; IMP biosynthesis via de novo pathway; 5-amino-1-(5-phospho-D-ribosyl)imidazole-4-carboxamide from 5-amino-1-(5-phospho-D-ribosyl)imidazole-4-carboxylate: step 1/2. The polypeptide is Phosphoribosylaminoimidazole-succinocarboxamide synthase (Thermoplasma acidophilum (strain ATCC 25905 / DSM 1728 / JCM 9062 / NBRC 15155 / AMRC-C165)).